A 554-amino-acid polypeptide reads, in one-letter code: Propanediol dehydratase large subunit (554 aa).

This sequence belongs to the diol/glycerol dehydratase large subunit family. As to quaternary structure, the propanediol dehydratase enzyme is a heterotrimeric complex composed of a large (PduC), a medium (PduD) and a small (PduE) subunit. Adenosylcob(III)alamin is required as a cofactor.

The protein resides in the bacterial microcompartment. The catalysed reaction is propane-1,2-diol = propanal + H2O. Its pathway is polyol metabolism; 1,2-propanediol degradation. In terms of biological role, part of the PduCDE complex that catalyzes the dehydration of 1,2-propanediol (1,2-PD) to propionaldehyde. This subunit is directly targeted to the bacterial microcompartment (BMC). Expression of a cosmid containing the full 21-gene pdu operon in E.coli allows E.coli to grow on 1,2-propanediol (1,2-PD) with the appearance of BMCs in its cytoplasm. Its function is as follows. The 1,2-PD-specific bacterial microcompartment (BMC) concentrates low levels of 1,2-PD catabolic enzymes, concentrates volatile reaction intermediates thus enhancing pathway flux and keeps the level of toxic, mutagenic propionaldehyde low. The protein is Propanediol dehydratase large subunit of Citrobacter freundii.